A 930-amino-acid polypeptide reads, in one-letter code: Xanthan lyase (930 aa).

Residues 1 to 25 form the signal peptide; sequence MLSGILIAALLMTLWGGWQPDIAHA. Xanthan is bound by residues 146–148, His246, Tyr255, Arg309, 313–315, and Asn424; these read NWW and RSY. The Proton donor/acceptor role is filled by Tyr255. Ca(2+) is bound by residues Asp515, Asp516, and Glu517. Residue Arg612 coordinates xanthan. Residue Glu676 participates in Ca(2+) binding.

Belongs to the polysaccharide lyase 8 family. As to quaternary structure, monomer.

The protein resides in the secreted. The enzyme catalyses Eliminative cleavage of the terminal beta-D-mannosyl-(1-&gt;4)-beta-D-glucuronosyl linkage of the side-chain of the polysaccharide xanthan, leaving a 4-deoxy-alpha-L-threo-hex-4-enuronosyl group at the terminus of the side-chain.. Activated by Co(2+) at 1 mM. Completely inhibited by Hg(2+) but not affected by other divalent cations. Intensely inhibited by NaCl and KCl at 150 mM, in particular by the Na(+) and K(+) ions but not the Cl(-) ions. Partially inhibited by iodoacetamide and N-ethylmaleimide at 1 mM but not by dithiothreitol, reduced glutathione or 2-mercaptoethanol. Its function is as follows. Plays a role in xanthan depolymerization pathway by cleaving the linkage between the terminal mannosyl and glucuronyl residues of the side chain of xanthan to liberate pyruvylated mannose. Is highly specific for pyruvylated side-chains of xanthan and is not effective with hyaluronate, chondroitin A, gellan, heparin or pectin. The protein is Xanthan lyase of Bacillus sp. (strain GL1).